The following is an 83-amino-acid chain: Small ribosomal subunit protein bS20 (83 aa).

A disordered region spans residues 60–83; it reads ASKGLIHKNKASRDKSRLAAKLAN.

Belongs to the bacterial ribosomal protein bS20 family.

Binds directly to 16S ribosomal RNA. The chain is Small ribosomal subunit protein bS20 from Streptococcus thermophilus (strain CNRZ 1066).